The following is a 213-amino-acid chain: Protein-L-isoaspartate O-methyltransferase (213 aa).

Residue serine 64 is part of the active site.

This sequence belongs to the methyltransferase superfamily. L-isoaspartyl/D-aspartyl protein methyltransferase family.

It is found in the cytoplasm. It catalyses the reaction [protein]-L-isoaspartate + S-adenosyl-L-methionine = [protein]-L-isoaspartate alpha-methyl ester + S-adenosyl-L-homocysteine. In terms of biological role, catalyzes the methyl esterification of L-isoaspartyl residues in peptides and proteins that result from spontaneous decomposition of normal L-aspartyl and L-asparaginyl residues. It plays a role in the repair and/or degradation of damaged proteins. This is Protein-L-isoaspartate O-methyltransferase from Christiangramia forsetii (strain DSM 17595 / CGMCC 1.15422 / KT0803) (Gramella forsetii).